The chain runs to 2346 residues: Nucleoprotein TPR (2346 aa).

Coiled coils occupy residues 38–190, 217–366, 395–493, and 565–596; these read DEYC…HKEI, QLQS…NLES, YAKS…SRQV, and KMLLEQSKNHIRKLDARFAELEDLLTQKNNTV. Positions 622–649 are disordered; the sequence is VDLDDSNLEPNDSALDTSEQPAANFEES. Residues 629 to 642 are compositionally biased toward polar residues; that stretch reads LEPNDSALDTSEQP. 2 coiled-coil regions span residues 643–1158 and 1196–1247; these read AANF…IEAL and EEGR…DELN. The interacts with Mad1 stretch occupies residues 1187 to 1655; the sequence is LNASGLTAAE…SPRTANVKPM (469 aa). Phosphothreonine is present on residues T1259, T1302, T1338, and T1390. 2 coiled-coil regions span residues 1281 to 1536 and 1579 to 1627; these read TDSN…KRTE and SYDE…GSQQ. 2 stretches are compositionally biased toward polar residues: residues 1621-1649 and 1657-1667; these read RQLGSQQSTKPSTSSVAEKGNISESSPRT and GSATVQQSATV. 3 disordered regions span residues 1621-1677, 1695-1768, and 1821-2346; these read RQLG…ETPL, PTSQ…YMPS, and SPRV…GRFP. Low complexity predominate over residues 1702 to 1722; it reads AGSSTSTSSSSSSSSTSTTSA. The segment covering 1738–1747 has biased composition (polar residues); sequence PQQQVHTTGS. 2 stretches are compositionally biased toward low complexity: residues 1752 to 1761 and 1827 to 1878; these read SMASSSPTSS and SSSS…PSSS. The span at 1879–1891 shows a compositional bias: polar residues; sequence NVTTTQAGCSSQG. Over residues 1953-2023 the composition is skewed to acidic residues; it reads QEDDIQVVDS…QDNNEVDIEV (71 aa). The segment covering 2028–2080 has biased composition (polar residues); it reads MQAQEESQSLDNQAIATASASTQENNQSQAITSGSGESSNPVTLPQAEASNWK. The span at 2082 to 2091 shows a compositional bias: low complexity; sequence AAASTSTAAA. 2 stretches are compositionally biased toward polar residues: residues 2097-2110 and 2142-2159; these read SVEIVSSPQVSNFC and GAASASSPQKQSEAGESS. Residues 2165 to 2184 show a composition bias toward basic and acidic residues; the sequence is KAADDGGDHADGTDNAREAD. Polar residues-rich tracts occupy residues 2193 to 2223 and 2302 to 2322; these read ATGQGEDSQPLGNDNPNVGTSQSEVSHNQAN and RDTSPGNIQQNQMSANNNRFA. A compositionally biased stretch (basic residues) spans 2323–2332; it reads QRTRNRRPIR.

This sequence belongs to the TPR family. Part of the nuclear pore complex (NPC). Associates with male-specific lethal (MSL) histone acetyltransferase complex. Interacts with Mad2; the interaction is required for efficient recruitment of Mad2 to unattached kinetochore and occurs in a microtubule-independent manner. Interacts with Mad1 (N-terminus). Interacts with Chro, east and Asator; the interaction is part of a macromolecular complex forming the spindle matrix during mitosis. Interacts with Nup98. In males, interacts with histone acetyltransferase mof. In terms of processing, mps1-mediated phosphorylation disrupts interaction with Mad1 during mitosis. In terms of tissue distribution, expressed in salivary glands, fat body, tracheal tube, esophageal tube and anterior ejaculatory duct (at protein level).

It localises to the nucleus. Its subcellular location is the nucleus matrix. It is found in the nucleus lamina. The protein resides in the nucleus envelope. The protein localises to the nucleus membrane. It localises to the nuclear pore complex. Its subcellular location is the cytoplasm. It is found in the cytoskeleton. The protein resides in the spindle. The protein localises to the chromosome. It localises to the centromere. Its subcellular location is the kinetochore. It is found in the midbody. Its function is as follows. Component of the nuclear pore complex (NPC), a complex required for the trafficking across the nuclear envelope. Functions as a scaffolding element in the nuclear phase of the NPC. Plays a role in chromosomal organization and gene expression regulation; stimulates transcription by promoting the formation of an open chromatin environment. Binds chromatin to nucleoporin-associated regions (NARs) that define transcriptionally active regions of the genome. Associates with extended chromosomal regions that alternate between domains of high density binding with those of low occupancy. Preferentially binds to NARs of the male X chromosome. In males, together with Nup153, required for the localization of the male-specific lethal (MSL) histone acetyltransferase complex to the X chromosome and therefore for the transcription of dosage compensation genes. In males, restrains dosage-compensated expression at the level of nascent transcription probably by interacting with the MSL complex and by modulating RNA Polymerase II phosphorylation status and activity. During mitosis forms a gel-like spindle matrix complex together with Skeletor (Skel), Chro, east, and Asator embedding the microtubule spindle apparatus. During interphase localizes Mad1 to the nuclear pore complex and thereby might act as a scaffold to assemble the Mad1-C-Mad2 complex, a heterotetramer that catalyzes the structural conversion of open-Mad2 (O-Mad2) into closed-Mad2 (C-Mad2) which is essential for spindle-assembly checkpoint (SAC). During the metaphase-anaphase transition and before chromosome congression, is phosphorylated by Msp-1; this modification releases Mad1 from the nuclear pore complex and thereby promotes assembly of SAC ensuring a timely and effective recruitment of spindle checkpoint proteins like Mad1, Mad2 and Mps1 to unattached kinetochores (KT). In testes, has a role in stem cell asymmetric division and maintenance via regulation of mitotic spindle assembly checkpoint (SAC) complex. This is Nucleoprotein TPR from Drosophila melanogaster (Fruit fly).